We begin with the raw amino-acid sequence, 275 residues long: MSSFSYRTLTVALFALICCPGSDEKVFEVHVRPKKLAVEPKGSLKVNCSTTCNQPEVGGLETSLDKILLDEQAQWKHYLVSNISHDTVLQCHFTCSGKQESMNSNVSVYQPPRQVILTLQPTLVAVGKSFTIECRVPTVEPLDSLTLFLFRGNETLHYETFGKAAPAPQEATVTFNSTADRDDGHRNFSCLAVLDLMSRGGNIFHKHSAPKMLEIYEPVSDSQMVIIVTVVSVLLSLFVTSVLLCFIFGQHLRQQRMGTYGVRAAWRRLPQAFRP.

A signal peptide spans 1 to 24 (MSSFSYRTLTVALFALICCPGSDE). Over 25–223 (KVFEVHVRPK…EIYEPVSDSQ (199 aa)) the chain is Extracellular. In terms of domain architecture, Ig-like C2-type 1 spans 41–98 (KGSLKVNCSTTCNQPEVGGLETSLDKILLDEQAQWKHYLVSNISHDTVLQCHFTCSGK). N-linked (GlcNAc...) asparagine glycosylation is found at Asn47, Asn82, Asn105, Asn153, Asn176, and Asn187. Cystine bridges form between Cys48/Cys91 and Cys52/Cys95. One can recognise an Ig-like C2-type 2 domain in the interval 127–197 (GKSFTIECRV…FSCLAVLDLM (71 aa)). Cys134 and Cys190 are oxidised to a cystine. A helical transmembrane segment spans residues 224–248 (MVIIVTVVSVLLSLFVTSVLLCFIF). Residues 249-275 (GQHLRQQRMGTYGVRAAWRRLPQAFRP) lie on the Cytoplasmic side of the membrane. Positions 251 to 275 (HLRQQRMGTYGVRAAWRRLPQAFRP) are required for interaction with EZR, MSN and RDX and co-localization to microvilli.

It belongs to the immunoglobulin superfamily. ICAM family. Interacts with RDX, EZR and MSN.

The protein resides in the membrane. It localises to the cell projection. Its subcellular location is the microvillus. ICAM proteins are ligands for the leukocyte adhesion protein LFA-1 (integrin alpha-L/beta-2). ICAM2 may play a role in lymphocyte recirculation by blocking LFA-1-dependent cell adhesion. It mediates adhesive interactions important for antigen-specific immune response, NK-cell mediated clearance, lymphocyte recirculation, and other cellular interactions important for immune response and surveillance. The protein is Intercellular adhesion molecule 2 (ICAM2) of Pan troglodytes (Chimpanzee).